The primary structure comprises 125 residues: TSSK6-activating co-chaperone protein (125 aa).

Disordered regions lie at residues 1–21 and 97–125; these read MEQH…ANAV and LAPG…QFSK. Residues 103 to 125 are compositionally biased toward low complexity; the sequence is SNNSSLPALSPNPLLNHLPQFSK.

This sequence belongs to the TSACC family. As to quaternary structure, interacts with HSP70. Associates with HSP90. Interacts with TSSK6; this interaction is direct and recruits TSACC to HSP90.

Its function is as follows. Co-chaperone that facilitates HSP-mediated activation of TSSK6. The protein is TSSK6-activating co-chaperone protein (TSACC) of Macaca fascicularis (Crab-eating macaque).